Reading from the N-terminus, the 344-residue chain is Cysteine proteinase 5 (344 aa).

A signal peptide spans Met1–Ala17. A propeptide spans Lys18–Ser111 (activation peptide). Disulfide bonds link Cys133–Cys174, Cys167–Cys207, and Cys265–Cys333. Cys136 is an active-site residue. The active site involves His272. N-linked (GlcNAc...) asparagine glycosylation occurs at Asn297. Asn311 is a catalytic residue.

This sequence belongs to the peptidase C1 family. Glycosylated; contains GlcNAc-alpha-1-P-Ser residues.

The protein resides in the lysosome. The polypeptide is Cysteine proteinase 5 (cprE) (Dictyostelium discoideum (Social amoeba)).